The primary structure comprises 407 residues: P2X receptor D (407 aa).

The Cytoplasmic portion of the chain corresponds to 1 to 22 (MDWDNIFSYNTAKIVTIKDRRL). The helical transmembrane segment at 23-43 (GGLHIIFMVLIIVYIVIYSTI) threads the bilayer. Residues 44–300 (YKKGYLLTET…IQNGEIGSFN (257 aa)) are Lumenal-facing. The tract at residues 283 to 296 (RHGIRLIFIQNGEI) is pore-forming motif. A helical transmembrane segment spans residues 301–321 (FQALLLTFVSGLGLLAISTVL). Over 322-407 (VDQLAIRFLP…QNIQNNNIIL (86 aa)) the chain is Cytoplasmic. The interval 371–394 (KNNENNNNNDDYNDDDNEIFDDNN) is disordered. Residues 381 to 391 (DYNDDDNEIFD) are compositionally biased toward acidic residues.

It belongs to the P2X receptor family.

The protein resides in the contractile vacuole membrane. Its function is as follows. P2X receptors are ligand-gated ion channels that play a role in intracellular calcium signaling. ATP does not evoke inward currents in p2xD. Not essential for osmoregulation. The chain is P2X receptor D (p2xD) from Dictyostelium discoideum (Social amoeba).